Consider the following 73-residue polypeptide: V-type proton ATPase subunit e (73 aa).

The Lumenal portion of the chain corresponds to 1-3; it reads MSS. A helical transmembrane segment spans residues 4–24; sequence FYTVVGVFIVVSAMSVLFWIM. Topologically, residues 25-35 are cytoplasmic; that stretch reads APKNNQAVWRS. Residues 36-56 traverse the membrane as a helical segment; sequence TVILTLAMMFLMWAITFLCQL. Over 57 to 73 the chain is Lumenal; that stretch reads HPLVAPRRSDLRPEFAE.

The protein belongs to the V-ATPase e1/e2 subunit family. V-ATPase is a heteromultimeric enzyme composed of a peripheral catalytic V1 complex (components A to H) attached to an integral membrane V0 proton pore complex (components: a, c, c', c'', d, e, f and VOA1).

It localises to the vacuole membrane. Its function is as follows. Subunit of the V0 complex of vacuolar(H+)-ATPase (V-ATPase), a multisubunit enzyme composed of a peripheral complex (V1) that hydrolyzes ATP and a membrane integral complex (V0) that translocates protons. V-ATPase is responsible for acidifying and maintaining the pH of intracellular compartments. This chain is V-type proton ATPase subunit e (VMA9), found in Saccharomyces cerevisiae (strain ATCC 204508 / S288c) (Baker's yeast).